The primary structure comprises 714 residues: Calpain-1 catalytic subunit (714 aa).

N-acetylserine is present on Ser2. The Calpain catalytic domain maps to 55–354; sequence LFRDEAFPPV…FTRLEICNLT (300 aa). The Ca(2+) site is built by Gln109 and Asp114. Residues Cys115, His272, and Asn296 contribute to the active site. Asn316, Asp318, and Asp323 together coordinate Ca(2+). Thr354 carries the post-translational modification Phosphothreonine. Residues 355-526 form a domain III region; that stretch reads PDALKSRTIR…KSAGTVELDD (172 aa). Residues 527–542 form a linker region; that stretch reads QIQANLPDEQVLSEEE. 4 EF-hand domains span residues 541-576, 585-618, 615-650, and 680-714; these read EEID…IISK, FSLE…NRIR, NRIR…AGFK, and VRLE…TMFA. A domain IV region spans residues 543 to 713; sequence IDENFKALFR…LFKWLQLTMF (171 aa). Ca(2+) is bound by residues Asp598, Asp600, Asn602, Lys604, Glu609, Asp628, Asp630, Ser632, Ser634, and Glu639.

Belongs to the peptidase C2 family. Forms a heterodimer with a small (regulatory) subunit CAPNS1. The cofactor is Ca(2+). Post-translationally, undergoes calcium-induced successive autoproteolytic cleavages that generate a membrane-bound 78 kDa active form and an intracellular 75 kDa active form. Calpastatin reduces with high efficiency the transition from 78 kDa to 75 kDa calpain forms. As to expression, ubiquitous.

The protein resides in the cytoplasm. The protein localises to the cell membrane. It carries out the reaction Broad endopeptidase specificity.. With respect to regulation, activated by micromolar concentrations of calcium and inhibited by calpastatin. Functionally, calcium-regulated non-lysosomal thiol-protease which catalyzes limited proteolysis of substrates involved in cytoskeletal remodeling and signal transduction. Proteolytically cleaves CTBP1 at 'Asn-375', 'Gly-387' and 'His-409'. Cleaves and activates caspase-7 (CASP7). The sequence is that of Calpain-1 catalytic subunit from Homo sapiens (Human).